A 176-amino-acid polypeptide reads, in one-letter code: Gamma-crystallin M2 (176 aa).

2 consecutive Beta/gamma crystallin 'Greek key' domains span residues Gly-2 to Gly-40 and Gly-41 to Pro-83. Positions Gln-84–Ser-88 are connecting peptide. Beta/gamma crystallin 'Greek key' domains follow at residues Tyr-89–Asp-129 and Gly-130–Met-172.

The protein belongs to the beta/gamma-crystallin family. In terms of assembly, monomer.

Crystallins are the dominant structural components of the vertebrate eye lens. This is Gamma-crystallin M2 (GM2) from Chiloscyllium indicum (Slender bamboo shark).